Reading from the N-terminus, the 100-residue chain is Large ribosomal subunit protein uL23 (100 aa).

Belongs to the universal ribosomal protein uL23 family. As to quaternary structure, part of the 50S ribosomal subunit. Contacts protein L29, and trigger factor when it is bound to the ribosome.

Functionally, one of the early assembly proteins it binds 23S rRNA. One of the proteins that surrounds the polypeptide exit tunnel on the outside of the ribosome. Forms the main docking site for trigger factor binding to the ribosome. The sequence is that of Large ribosomal subunit protein uL23 from Acaryochloris marina (strain MBIC 11017).